A 328-amino-acid chain; its full sequence is Fructokinase-2 (328 aa).

Belongs to the carbohydrate kinase PfkB family.

The catalysed reaction is D-fructose + ATP = D-fructose 6-phosphate + ADP + H(+). It participates in glycan biosynthesis; starch biosynthesis. Functionally, may play an important role in maintaining the flux of carbon towards starch formation. The polypeptide is Fructokinase-2 (FRK2) (Solanum lycopersicum (Tomato)).